Here is an 835-residue protein sequence, read N- to C-terminus: Axin-1 (835 aa).

A disordered region spans residues 16–60; that stretch reads LGSSFTEDAPRPPVPGEEGDLVSSDGRQYNHSFYSSKSDSLKNEA. Residues 40-53 are compositionally biased toward polar residues; the sequence is DGRQYNHSFYSSKS. Residues 92–214 enclose the RGS domain; it reads SLHSLLDDQD…LKSDIYLEYT (123 aa). Residues 318–349 are disordered; it reads ATSANDSEQQSMSSDADTLSLTDSSVDGVPPY. A compositionally biased stretch (low complexity) spans 328–344; it reads SMSSDADTLSLTDSSVD. Residues 351-436 form an interaction with GSK3B region; sequence YRKPHRREIH…DADISTGPSL (86 aa). Residues 437-512 form an interaction with beta-catenin region; sequence ANHRVPPAVH…SPDGLPAGKI (76 aa). Disordered regions lie at residues 485–530 and 602–627; these read KTPG…QARQ and GYSS…FEMR. A compositionally biased stretch (basic and acidic residues) spans 616–627; that stretch reads RKGEDGRNFEMR. A DIX domain is found at 753-835; the sequence is CENITVAYYF…KIIGKVEKVD (83 aa).

In terms of assembly, homodimer. Interacts with dixdc1. Interacts with hwa; leading to promote the tankyrase-mediated degradation of axin1. ADP-ribosylated by tankyrase tnks and tnks2. Poly-ADP-ribosylated protein is recognized by rnf146, followed by ubiquitination at 'Lys-48' and subsequent activation of the Wnt signaling pathway. In terms of processing, ubiquitinated by rnf146 when poly-ADP-ribosylated, leading to its degradation and subsequent activation of the Wnt signaling pathway.

It is found in the cytoplasm. Its subcellular location is the nucleus. The protein resides in the membrane. It localises to the cell membrane. Its function is as follows. Component of the beta-catenin destruction complex required for regulating ctnnb1 levels through phosphorylation and ubiquitination, and modulating Wnt-signaling. Controls dorsoventral patterning via two opposing effects: down-regulates ctnnb1 to inhibit the Wnt signaling pathway and ventralize embryos, but also dorsalizes embryos by activating a Wnt-independent JNK signaling pathway. In Danio rerio (Zebrafish), this protein is Axin-1 (axin1).